The sequence spans 381 residues: Methanesulfonate monooxygenase (381 aa).

The protein belongs to the SsuD family.

The catalysed reaction is an alkanesulfonate + FMNH2 + O2 = an aldehyde + FMN + sulfite + H2O + 2 H(+). Its function is as follows. Catalyzes the desulfonation of aliphatic sulfonates. Shows highest activity with methanesulfonate. This is Methanesulfonate monooxygenase (msuD) from Pseudomonas aeruginosa (strain ATCC 15692 / DSM 22644 / CIP 104116 / JCM 14847 / LMG 12228 / 1C / PRS 101 / PAO1).